The following is an 815-amino-acid chain: Calpain-3 (815 aa).

Residues Ala7–Gly36 are disordered. The region spanning Leu74 to Thr417 is the Calpain catalytic domain. Catalysis depends on residues Cys129, His334, and Asn358. The interval Ala418–Asn586 is domain III. A linker region spans residues Thr587–Arg649. The interval Ser605 to Gln646 is disordered. Basic and acidic residues predominate over residues Glu616–Glu628. Low complexity predominate over residues Gln629 to Asp639. EF-hand domains are found at residues Glu643 to Lys677, Phe686 to Lys719, Asn716 to His751, and Val781 to Ala815. A domain IV region spans residues Asn650–Ala815. Ca(2+) is bound by residues Ala656, Asp659, Glu661, Glu666, Asp699, Asp701, Ser703, Lys705, Glu710, Asp729, Asp731, Ser733, Thr735, Glu740, Asp794, Asp796, Asp798, and Ile800.

Belongs to the peptidase C2 family. As to quaternary structure, homodimer; via EF-hand domain 4. Interacts with TTN/titin. Interacts with CMYA5; this interaction, which results in CMYA5 proteolysis, may protect CAPN3 from autolysis. Interacts with SIMC1. Interacts with UTP25; the interaction is required for CAPN3 translocation to the nucleolus.

It is found in the cytoplasm. It localises to the nucleus. The protein resides in the nucleolus. The catalysed reaction is Broad endopeptidase activity.. Its activity is regulated as follows. Activated by micromolar concentrations of calcium and inhibited by calpastatin. Functionally, calcium-regulated non-lysosomal thiol-protease. Proteolytically cleaves CTBP1. Mediates, with UTP25, the proteasome-independent degradation of p53/TP53. The polypeptide is Calpain-3 (CAPN3) (Macaca fascicularis (Crab-eating macaque)).